We begin with the raw amino-acid sequence, 64 residues long: Prokaryotic ubiquitin-like protein Pup (64 aa).

A disordered region spans residues 1 to 36; that stretch reads MAQEQTKRGGGGGDDEDVTGTTAAGQERRKKLAQDT. Residues 21–58 form an ARC ATPase binding region; sequence TTAAGQERRKKLAQDTDDLLDEIDDVLEENAEDFVRAY. The stretch at 26-52 forms a coiled coil; that stretch reads QERRKKLAQDTDDLLDEIDDVLEENAE. Gln64 carries the deamidated glutamine modification. Gln64 participates in a covalent cross-link: Isoglutamyl lysine isopeptide (Gln-Lys) (interchain with K-? in acceptor proteins).

It belongs to the prokaryotic ubiquitin-like protein family. As to quaternary structure, strongly interacts with the proteasome-associated ATPase ARC through a hydrophobic interface; the interacting region of Pup lies in its C-terminal half. There is one Pup binding site per ARC hexamer ring. Post-translationally, is modified by deamidation of its C-terminal glutamine to glutamate by the deamidase Dop, a prerequisite to the subsequent pupylation process.

It participates in protein degradation; proteasomal Pup-dependent pathway. Its function is as follows. Protein modifier that is covalently attached to lysine residues of substrate proteins, thereby targeting them for proteasomal degradation. The tagging system is termed pupylation. This Mycobacterium ulcerans (strain Agy99) protein is Prokaryotic ubiquitin-like protein Pup.